Consider the following 417-residue polypeptide: Guanine nucleotide-exchange factor SEC12 (417 aa).

Topologically, residues Met1 to Ser388 are cytoplasmic. Tyr10 is subject to 3'-nitrotyrosine. The disordered stretch occupies residues Lys101–Glu135. Composition is skewed to basic and acidic residues over residues Ser103 to Pro115 and Ala124 to Glu135. 3 WD repeats span residues Ser152–Glu191, Ala194–Gln232, and Cys298–Tyr337. Residues Val389–Leu409 traverse the membrane as a helical segment. Topologically, residues Gln410 to Leu417 are lumenal.

In terms of assembly, interacts with SAR1B (GDP-bound form). Interacts with MIA2; recruits PREB to endoplasmic reticulum exit sites. Interacts with CIDEB; facilitating loading of SCAP-SREBP into COPII vesicles.

Its subcellular location is the endoplasmic reticulum membrane. The protein resides in the nucleus. In terms of biological role, guanine nucleotide exchange factor (GEF) that regulates the assembly of the coat protein complex II/COPII in endoplasmic reticulum (ER) to Golgi vesicle-mediated transport. Selectively activates SAR1A and SAR1B by promoting the exchange of guanosine diphosphate (GDP) for guanosine triphosphate (GTP) in these small GTPases. In their activated GTP-bound state, SAR1A and SAR1B insert into the membrane of the endoplasmic reticulum where they recruit the remainder of the coat protein complex II/COPII which is responsible for both the sorting of proteins and the deformation and budding of membranes into vesicles destined to the Golgi. Was first identified based on its probable role in the regulation of pituitary gene transcription. Binds to the prolactin gene (PRL) promoter and seems to activate transcription. This chain is Guanine nucleotide-exchange factor SEC12, found in Rattus norvegicus (Rat).